We begin with the raw amino-acid sequence, 166 residues long: Co-chaperone protein HscB homolog (166 aa).

Positions 3–75 (QYFTLFRIEP…IDRAAYLLKT (73 aa)) constitute a J domain.

The protein belongs to the HscB family. As to quaternary structure, interacts with HscA and stimulates its ATPase activity.

Functionally, co-chaperone involved in the maturation of iron-sulfur cluster-containing proteins. Seems to help targeting proteins to be folded toward HscA. In Neisseria gonorrhoeae (strain NCCP11945), this protein is Co-chaperone protein HscB homolog.